The chain runs to 303 residues: MNIDDLDFRHLVLLDALLKRHSVSAAARELDLPQPTASHGLARLRKALGDPLLVRARDGMEPTPRAEAIAGVVQQLLELRRDLAEGGQTFSPDRLKREFIIAGSDIAHLVVLTALHSAARFEAPHTSYRALTLSGDEMVSALETGHVDIAVGAYPSLVAGIKTQRLYQEEYLCFGKEGHPFIKSGETDDFMAADHIVVSTKGMAHAHRAVERALLDKIHPDRIRIVASSFLVALAACFESDLILTAPARVIGRLAEVYGLRAVRPPILMEAFEVRQYWHARNQDDPPHRWLRQLLHKVLSARM.

The 58-residue stretch at 6 to 63 folds into the HTH lysR-type domain; sequence LDFRHLVLLDALLKRHSVSAAARELDLPQPTASHGLARLRKALGDPLLVRARDGMEPT. The segment at residues 23-42 is a DNA-binding region (H-T-H motif); that stretch reads VSAAARELDLPQPTASHGLA.

It belongs to the LysR transcriptional regulatory family.

Positively regulates the transcription of the linD and linE genes that are involved in gamma-hexachlorocyclohexane (gamma-HCH or lindane) degradation. This degradation pathway allows S.japonicum UT26 to grow on gamma-HCH as the sole source of carbon and energy. The sequence is that of HTH-type transcriptional regulator LinR (linR) from Sphingobium indicum (strain DSM 16413 / CCM 7287 / MTCC 6362 / UT26 / NBRC 101211 / UT26S) (Sphingobium japonicum).